The primary structure comprises 494 residues: Probable cytosol aminopeptidase (494 aa).

Positions 260 and 265 each coordinate Mn(2+). The active site involves Lys272. The Mn(2+) site is built by Asp283, Asp342, and Glu344. Arg346 is a catalytic residue.

Belongs to the peptidase M17 family. It depends on Mn(2+) as a cofactor.

It is found in the cytoplasm. The enzyme catalyses Release of an N-terminal amino acid, Xaa-|-Yaa-, in which Xaa is preferably Leu, but may be other amino acids including Pro although not Arg or Lys, and Yaa may be Pro. Amino acid amides and methyl esters are also readily hydrolyzed, but rates on arylamides are exceedingly low.. It catalyses the reaction Release of an N-terminal amino acid, preferentially leucine, but not glutamic or aspartic acids.. In terms of biological role, presumably involved in the processing and regular turnover of intracellular proteins. Catalyzes the removal of unsubstituted N-terminal amino acids from various peptides. This chain is Probable cytosol aminopeptidase, found in Bacillus cereus (strain ATCC 14579 / DSM 31 / CCUG 7414 / JCM 2152 / NBRC 15305 / NCIMB 9373 / NCTC 2599 / NRRL B-3711).